The sequence spans 115 residues: MNLIQSLEQEQIKKELPSFRPGDTIKVNYKVIEGNRERIQAFEGVVIRRRGGGLSETFTVRRISYGVGVERTFPLHAPKIDSIEVVRRGKVRRARLYYLRALRGKKARIKELSTR.

The protein belongs to the bacterial ribosomal protein bL19 family.

In terms of biological role, this protein is located at the 30S-50S ribosomal subunit interface and may play a role in the structure and function of the aminoacyl-tRNA binding site. This Desulforamulus reducens (strain ATCC BAA-1160 / DSM 100696 / MI-1) (Desulfotomaculum reducens) protein is Large ribosomal subunit protein bL19.